The chain runs to 740 residues: Vacuolar protein sorting-associated protein 51 homolog (740 aa).

2 coiled-coil regions span residues 65–87 and 322–344; these read SATDTIRRMKDDFKQMETDVNLL and RALDRLHRRLQAMRNICRGLEVQ.

Belongs to the VPS51 family. As to quaternary structure, component of the Golgi-associated retrograde protein (GARP) complex.

May act as a component of the GARP complex that is involved in retrograde transport from early and late endosomes to the trans-Golgi network (TGN). This Drosophila melanogaster (Fruit fly) protein is Vacuolar protein sorting-associated protein 51 homolog.